The sequence spans 244 residues: Uridylate kinase (244 aa).

An ATP-binding site is contributed by 15–18; sequence KLSG. The tract at residues 23-28 is involved in allosteric activation by GTP; it reads GSEGFG. Gly57 contributes to the UMP binding site. The ATP site is built by Gly58 and Arg62. UMP-binding positions include Asp77 and 138–145; that span reads TGNPFFTT. The ATP site is built by Thr165, Phe171, and Asp174.

Belongs to the UMP kinase family. Homohexamer.

It localises to the cytoplasm. The enzyme catalyses UMP + ATP = UDP + ADP. Its pathway is pyrimidine metabolism; CTP biosynthesis via de novo pathway; UDP from UMP (UMPK route): step 1/1. Allosterically activated by GTP. Inhibited by UTP. Its function is as follows. Catalyzes the reversible phosphorylation of UMP to UDP. The sequence is that of Uridylate kinase from Aeromonas hydrophila subsp. hydrophila (strain ATCC 7966 / DSM 30187 / BCRC 13018 / CCUG 14551 / JCM 1027 / KCTC 2358 / NCIMB 9240 / NCTC 8049).